Consider the following 197-residue polypeptide: Adenylate kinase (197 aa).

Residue 19–24 (GSGKGT) participates in ATP binding. Residues 39 to 68 (SSGDLLRAEVQSGSPKGKELKAMMERGELV) form an NMP region. AMP-binding positions include Ser-40, Arg-45, 66-68 (ELV), 95-98 (RYPR), and Gln-102. The LID stretch occupies residues 132 to 142 (KRAETSNRVDD). Arg-133 is a binding site for ATP. Positions 139 and 150 each coordinate AMP. Gly-178 is an ATP binding site.

The protein belongs to the adenylate kinase family. In terms of assembly, monomer.

Its subcellular location is the cytoplasm. The enzyme catalyses AMP + ATP = 2 ADP. Its function is as follows. Catalyzes the reversible transfer of the terminal phosphate group between ATP and AMP. Plays an important role in cellular energy homeostasis and in adenine nucleotide metabolism. This Schistosoma mansoni (Blood fluke) protein is Adenylate kinase.